A 475-amino-acid polypeptide reads, in one-letter code: UDP-N-acetylmuramate--L-alanine ligase (475 aa).

Position 114–120 (114–120) interacts with ATP; the sequence is GTHGKTT.

It belongs to the MurCDEF family.

It localises to the cytoplasm. It catalyses the reaction UDP-N-acetyl-alpha-D-muramate + L-alanine + ATP = UDP-N-acetyl-alpha-D-muramoyl-L-alanine + ADP + phosphate + H(+). It participates in cell wall biogenesis; peptidoglycan biosynthesis. In terms of biological role, cell wall formation. The chain is UDP-N-acetylmuramate--L-alanine ligase from Bartonella tribocorum (strain CIP 105476 / IBS 506).